We begin with the raw amino-acid sequence, 473 residues long: Inactive levansucrase (473 aa).

Residues 1 to 29 (MNIKKFAKQATVLTFTTALLAGGATQAFA) form the signal peptide.

The protein belongs to the glycosyl hydrolase 68 family.

It is found in the secreted. The protein is Inactive levansucrase (sacB) of Geobacillus stearothermophilus (Bacillus stearothermophilus).